The sequence spans 491 residues: Glutamyl-tRNA(Gln) amidotransferase subunit A (491 aa).

Residues Lys-78 and Ser-158 each act as charge relay system in the active site. Ser-182 serves as the catalytic Acyl-ester intermediate.

This sequence belongs to the amidase family. GatA subfamily. Heterotrimer of A, B and C subunits.

The catalysed reaction is L-glutamyl-tRNA(Gln) + L-glutamine + ATP + H2O = L-glutaminyl-tRNA(Gln) + L-glutamate + ADP + phosphate + H(+). In terms of biological role, allows the formation of correctly charged Gln-tRNA(Gln) through the transamidation of misacylated Glu-tRNA(Gln) in organisms which lack glutaminyl-tRNA synthetase. The reaction takes place in the presence of glutamine and ATP through an activated gamma-phospho-Glu-tRNA(Gln). In Afipia carboxidovorans (strain ATCC 49405 / DSM 1227 / KCTC 32145 / OM5) (Oligotropha carboxidovorans), this protein is Glutamyl-tRNA(Gln) amidotransferase subunit A.